Here is a 185-residue protein sequence, read N- to C-terminus: Elongation factor P (185 aa).

This sequence belongs to the elongation factor P family.

The protein resides in the cytoplasm. It participates in protein biosynthesis; polypeptide chain elongation. Functionally, involved in peptide bond synthesis. Stimulates efficient translation and peptide-bond synthesis on native or reconstituted 70S ribosomes in vitro. Probably functions indirectly by altering the affinity of the ribosome for aminoacyl-tRNA, thus increasing their reactivity as acceptors for peptidyl transferase. This chain is Elongation factor P, found in Tropheryma whipplei (strain TW08/27) (Whipple's bacillus).